Consider the following 202-residue polypeptide: Na(+)-translocating NADH-quinone reductase subunit E (202 aa).

The next 6 membrane-spanning stretches (helical) occupy residues 4–24, 35–55, 81–101, 114–134, 144–164, and 180–200; these read LAGL…FFLG, IEVA…TVPI, FLGL…LEMF, GIYL…LFMV, LVYG…LAGV, and LGIT…FSGI.

It belongs to the NqrDE/RnfAE family. Composed of six subunits; NqrA, NqrB, NqrC, NqrD, NqrE and NqrF.

The protein resides in the cell inner membrane. It carries out the reaction a ubiquinone + n Na(+)(in) + NADH + H(+) = a ubiquinol + n Na(+)(out) + NAD(+). Functionally, NQR complex catalyzes the reduction of ubiquinone-1 to ubiquinol by two successive reactions, coupled with the transport of Na(+) ions from the cytoplasm to the periplasm. NqrA to NqrE are probably involved in the second step, the conversion of ubisemiquinone to ubiquinol. The polypeptide is Na(+)-translocating NADH-quinone reductase subunit E (Nitrosomonas europaea (strain ATCC 19718 / CIP 103999 / KCTC 2705 / NBRC 14298)).